We begin with the raw amino-acid sequence, 1158 residues long: Rho1 guanine nucleotide exchange factor 2 (1158 aa).

The disordered stretch occupies residues 42–141 (RSSGSITHSP…SFSVSDVSNG (100 aa)). Residues 45-63 (GSITHSPTALSSTTSLNEN) are compositionally biased toward polar residues. The span at 68–81 (FRPASSLSFSPSSL) shows a compositional bias: low complexity. Polar residues predominate over residues 97 to 108 (KNNFYRRSSSTD). Over residues 132 to 141 (SFSVSDVSNG) the composition is skewed to low complexity. The 188-residue stretch at 447-634 (KRQEIIFEVI…REFLTKLNYE (188 aa)) folds into the DH domain. The 136-residue stretch at 670–805 (LIFKGVVKLK…QHIEKQQDII (136 aa)) folds into the PH domain. Phosphoserine occurs at positions 746 and 747. The CNH domain maps to 825–1120 (GNKLLCAVAY…KLLTDGRGLI (296 aa)).

It is found in the cytoplasm. In terms of biological role, stimulates the exchange of Rho1 and Rho5 GDP-bound form into GTP-bound form. Controls septum formation, cell wall synthesis and localization of F-actin patches. The chain is Rho1 guanine nucleotide exchange factor 2 (rgf2) from Schizosaccharomyces pombe (strain 972 / ATCC 24843) (Fission yeast).